Reading from the N-terminus, the 165-residue chain is Ribonuclease H2 subunit C (165 aa).

Methionine 1 is subject to N-acetylmethionine.

This sequence belongs to the RNase H2 subunit C family. The RNase H2 complex is a heterotrimer composed of the catalytic subunit RNASEH2A and the non-catalytic subunits RNASEH2B and RNASEH2C.

It localises to the nucleus. Functionally, non catalytic subunit of RNase H2, an endonuclease that specifically degrades the RNA of RNA:DNA hybrids. Participates in DNA replication, possibly by mediating the removal of lagging-strand Okazaki fragment RNA primers during DNA replication. Mediates the excision of single ribonucleotides from DNA:RNA duplexes. The sequence is that of Ribonuclease H2 subunit C (RNASEH2C) from Bos taurus (Bovine).